The sequence spans 244 residues: Lectin (244 aa).

The disordered stretch occupies residues 1–20 (TETETTSFSIPKTDQPSSPK).

Belongs to the leguminous lectin family. As to quaternary structure, homodimer. In contrast to other Lathyrus lectins which are tetramer of two alpha and two beta chains.

This chain is Lectin, found in Lathyrus sphaericus (Spring vetchling).